A 194-amino-acid chain; its full sequence is Thymidylate kinase (194 aa).

Position 7–14 (7–14 (GVDCVGKS)) interacts with ATP.

This sequence belongs to the thymidylate kinase family.

It carries out the reaction dTMP + ATP = dTDP + ADP. In terms of biological role, phosphorylation of dTMP to form dTDP in both de novo and salvage pathways of dTTP synthesis. This Campylobacter lari (strain RM2100 / D67 / ATCC BAA-1060) protein is Thymidylate kinase.